Reading from the N-terminus, the 92-residue chain is N(2)-fixation sustaining protein CowN (92 aa).

It belongs to the CowN family.

Its function is as follows. Is required to sustain N(2)-dependent growth in the presence of low levels of carbon monoxide (CO). Probably acts by protecting the N(2) fixation ability of the nitrogenase complex, which is inactivated in the presence of CO. The polypeptide is N(2)-fixation sustaining protein CowN (Rhodopseudomonas palustris (strain BisB18)).